We begin with the raw amino-acid sequence, 101 residues long: uncharacterized protein (101 aa).

The next 2 membrane-spanning stretches (helical) occupy residues 35–55 (LWTMNGLIWAYWMMVLQLIII) and 66–86 (FLFFFSHLLLVPFFFFLTLLF).

It is found in the membrane. This is an uncharacterized protein from Saccharomyces cerevisiae (strain ATCC 204508 / S288c) (Baker's yeast).